The primary structure comprises 147 residues: Large ribosomal subunit protein bL9 (147 aa).

The protein belongs to the bacterial ribosomal protein bL9 family.

Its function is as follows. Binds to the 23S rRNA. The chain is Large ribosomal subunit protein bL9 from Bacteroides thetaiotaomicron (strain ATCC 29148 / DSM 2079 / JCM 5827 / CCUG 10774 / NCTC 10582 / VPI-5482 / E50).